A 149-amino-acid chain; its full sequence is Hydroalkoxylation enzyme phnH (149 aa).

The signal sequence occupies residues 1–18 (MKFTYLVSLAAFAVTALG). Residues N33 and N127 are each glycosylated (N-linked (GlcNAc...) asparagine).

As to quaternary structure, homotetramer.

The catalysed reaction is 2,4,7,9-tetrahydroxy-6-methyl-8-(2-methylbut-3-en-2-yl)-1-oxo-1H-phenalen-3-ol = (2'R)-atrovenetin. It functions in the pathway secondary metabolite biosynthesis. Functionally, hydroalkoxylation enzyme; part of the gene cluster that mediates the biosynthesis of phenalenones such as herqueinone, compounds that have been reported to treat tumors, bacterial infections and/or mycoses, and rheumatic diseases. The non-reducing polyketide synthase phnA synthesizes the heptaketide backbone and cyclizes it into the angular, hemiketal-containing naphtho-gamma-pyrone prephenalenone. The product template (PT) domain of phnA catalyzes only the C4-C9 aldol condensation, which is unprecedented among known PT domains. The transformation of prephenalenone to phenalenones requires an FAD-dependent monooxygenase phnB, which catalyzes the C2 aromatic hydroxylation of prephenalenone and ring opening of the gamma-pyrone ring simultaneously. Subsequent intramolecular deprotonation of C3 phenolic oxygen accelerates phenalenone ring closure to yield the tricyclic phenalenone core with a C2 hydroxylation. The prenyltransferase phnF further catalyzes reverse C-prenylation of phenalenone by direct electrophilic substitution at C6, or possibly via first a forward O-prenylation of a neighboring phenol in phenalenone, followed by a Claisen rearrangement. The hydroalkoxylation enzyme phnH catalyzes the 5-exo-trig cyclization via acid catalysis after the spontaneous deprotonation of 7-OH, which leads to the formation of the dihydrobenzofuran atrovenetin. Atrovenetin is further converted to deoxyherqueinone by the O-methyltransferase phnC which can methylate C2-OH to stabilize the northern portion of the phenalenone core. Finally, the oxidoreductase phnG converts deoxyherqueinone to herqueinone via C6 hydroxylation. This is Hydroalkoxylation enzyme phnH from Penicillium herquei.